Consider the following 380-residue polypeptide: Succinyl-diaminopimelate desuccinylase (380 aa).

H69 is a Zn(2+) binding site. The active site involves D71. Position 102 (D102) interacts with Zn(2+). The Proton acceptor role is filled by E135. Zn(2+)-binding residues include E136, E164, and H353.

It belongs to the peptidase M20A family. DapE subfamily. In terms of assembly, homodimer. The cofactor is Zn(2+). It depends on Co(2+) as a cofactor.

It catalyses the reaction N-succinyl-(2S,6S)-2,6-diaminopimelate + H2O = (2S,6S)-2,6-diaminopimelate + succinate. The protein operates within amino-acid biosynthesis; L-lysine biosynthesis via DAP pathway; LL-2,6-diaminopimelate from (S)-tetrahydrodipicolinate (succinylase route): step 3/3. Catalyzes the hydrolysis of N-succinyl-L,L-diaminopimelic acid (SDAP), forming succinate and LL-2,6-diaminopimelate (DAP), an intermediate involved in the bacterial biosynthesis of lysine and meso-diaminopimelic acid, an essential component of bacterial cell walls. The polypeptide is Succinyl-diaminopimelate desuccinylase (Phenylobacterium zucineum (strain HLK1)).